Here is a 434-residue protein sequence, read N- to C-terminus: UDP-N-acetylmuramoyl-L-alanyl-D-glutamate--2,6-diaminopimelate ligase (434 aa).

S17 is a UDP-N-acetyl-alpha-D-muramoyl-L-alanyl-D-glutamate binding site. 68-74 (GTNGKTT) contacts ATP. Residues 111–112 (TT), S138, Q144, and R146 each bind UDP-N-acetyl-alpha-D-muramoyl-L-alanyl-D-glutamate. K178 carries the post-translational modification N6-carboxylysine. Residues R326, 350 to 353 (DNPR), G401, and E405 each bind meso-2,6-diaminopimelate. The Meso-diaminopimelate recognition motif signature appears at 350-353 (DNPR).

The protein belongs to the MurCDEF family. MurE subfamily. Mg(2+) is required as a cofactor. Carboxylation is probably crucial for Mg(2+) binding and, consequently, for the gamma-phosphate positioning of ATP.

The protein resides in the cytoplasm. The catalysed reaction is UDP-N-acetyl-alpha-D-muramoyl-L-alanyl-D-glutamate + meso-2,6-diaminopimelate + ATP = UDP-N-acetyl-alpha-D-muramoyl-L-alanyl-gamma-D-glutamyl-meso-2,6-diaminopimelate + ADP + phosphate + H(+). Its pathway is cell wall biogenesis; peptidoglycan biosynthesis. Functionally, catalyzes the addition of meso-diaminopimelic acid to the nucleotide precursor UDP-N-acetylmuramoyl-L-alanyl-D-glutamate (UMAG) in the biosynthesis of bacterial cell-wall peptidoglycan. This chain is UDP-N-acetylmuramoyl-L-alanyl-D-glutamate--2,6-diaminopimelate ligase, found in Wolinella succinogenes (strain ATCC 29543 / DSM 1740 / CCUG 13145 / JCM 31913 / LMG 7466 / NCTC 11488 / FDC 602W) (Vibrio succinogenes).